Reading from the N-terminus, the 456-residue chain is MIDYKPVVQKKNLKVIEQREESIYYNKKSEDGGCGGDFKCDTASVSGSVSQRACVYCGARVVLNPITDAYHLVHGPIGCASYTWDIRGSLSSGEEIYRNSFSTDLREKDVIFGGEKKLSAAIDEIVAEKHPKVIFVYSTCIVGVIGDDTDAVCKAAEEKYGIRVIPVKSPGFAGSKSTGYKAACDALMKLMGDKTTDEKIDGINFLGDFNLAGEIWIVTNYLKKFGIDVVAKLTGDSSYDEIMNAPKAKLNIVQCAGSMMYLAKMMEKKFGIPYIKVSFYGVEDTKNSLLKIADILGNEEKVKKAKQFVLEEESKIENELDYYRDRLKGKKAAIFVGGAFKAISLIKQFRNLGMETVMVGTQTGKKDDYEIIESITTEGTVILDDANPYELEKFILEQGADILVGGVKERPLAYKLGIAFCDHNHERKHALSGYVGSLNFAKEIDLTINSPVWDYV.

It belongs to the NifD/NifK/NifE/NifN family.

The protein operates within cofactor biosynthesis; Fe-Mo cofactor biosynthesis. Functionally, this protein may play a role in the biosynthesis of the prosthetic group of nitrogenase (FeMo cofactor). In Clostridium pasteurianum, this protein is Nitrogenase iron-molybdenum cofactor biosynthesis protein NifE (nifE).